The chain runs to 176 residues: Large ribosomal subunit protein eL20 (176 aa).

It belongs to the eukaryotic ribosomal protein eL20 family. As to quaternary structure, component of the large ribosomal subunit.

The protein localises to the cytoplasm. Component of the large ribosomal subunit. The ribosome is a large ribonucleoprotein complex responsible for the synthesis of proteins in the cell. The polypeptide is Large ribosomal subunit protein eL20 (rpl18a) (Salmo salar (Atlantic salmon)).